Consider the following 113-residue polypeptide: Hydrogenase maturation factor HypA (113 aa).

Residue histidine 2 participates in Ni(2+) binding. Residues cysteine 73, cysteine 76, cysteine 89, and cysteine 92 each contribute to the Zn(2+) site.

It belongs to the HypA/HybF family.

Functionally, involved in the maturation of [NiFe] hydrogenases. Required for nickel insertion into the metal center of the hydrogenase. The chain is Hydrogenase maturation factor HypA from Methylocella silvestris (strain DSM 15510 / CIP 108128 / LMG 27833 / NCIMB 13906 / BL2).